Here is a 1651-residue protein sequence, read N- to C-terminus: Roundabout homolog 1 (1651 aa).

An N-terminal signal peptide occupies residues 1-25 (MKWKHVPFLVMISLLSLSPNHLFLA). Residues 26–897 (QLIPDPEDVE…QQISDVVKQP (872 aa)) lie on the Extracellular side of the membrane. A disordered region spans residues 33 to 57 (DVERGNDHGTPIPTSDNDDNSLGYT). The segment covering 44 to 56 (IPTSDNDDNSLGY) has biased composition (polar residues). Ig-like C2-type domains are found at residues 68 to 164 (PRIV…ASLE), 170 to 257 (DDFR…AELT), 262 to 346 (PSFV…ATLT), 351 to 446 (PHFV…LEVT), and 455 to 541 (PVIR…AYIE). Residues Cys89 and Cys147 are joined by a disulfide bond. Asn160 is a glycosylation site (N-linked (GlcNAc...) asparagine). Intrachain disulfides connect Cys191/Cys240, Cys283/Cys330, and Cys372/Cys428. A glycan (N-linked (GlcNAc...) asparagine) is linked at Asn463. A disulfide bridge connects residues Cys476 and Cys525. Fibronectin type-III domains follow at residues 563–657 (APSK…TQDV), 676–773 (AVLH…TLEE), and 778–874 (PPQG…LDAH). N-linked (GlcNAc...) asparagine glycans are attached at residues Asn790, Asn820, and Asn827. A helical transmembrane segment spans residues 898–918 (AFIAGIGAACWIILMVFSIWL). Residues 919–1651 (YRHRKKRNGL…NNEELEETES (733 aa)) lie on the Cytoplasmic side of the membrane. A Phosphoserine modification is found at Ser940. Position 948 is a phosphothreonine (Thr948). Tyr1038 is modified (phosphotyrosine; by ABL; in vitro). The residue at position 1055 (Ser1055) is a Phosphoserine. Phosphotyrosine; by ABL; in vitro is present on residues Tyr1073 and Tyr1114. 4 disordered regions span residues 1124-1202 (KDYR…SEEY), 1224-1337 (YLQQ…ADME), 1352-1397 (EQTP…DGSF), and 1420-1651 (RRQM…ETES). Polar residues predominate over residues 1137–1146 (PYNQSYDQNT). A compositionally biased stretch (low complexity) spans 1147 to 1163 (GGSYNSSDRGSSTSGSQ). A compositionally biased stretch (pro residues) spans 1186–1196 (LPPPPAHPPPH). Thr1240 is subject to Phosphothreonine. Over residues 1255-1269 (YSHQSTATLTPSPQE) the composition is skewed to polar residues. Residues 1281–1293 (ETGHMQHQPDRRR) are compositionally biased toward basic and acidic residues. A compositionally biased stretch (pro residues) spans 1296–1307 (VSPPPPPRPISP). Ser1297 carries the phosphoserine modification. The span at 1322 to 1336 (MDTDAPEEEEDEADM) shows a compositional bias: acidic residues. Residues 1384 to 1397 (SSGRSSVSSSDGSF) show a composition bias toward low complexity. The segment covering 1438-1451 (PRPTSPVSTDSNMS) has biased composition (polar residues). Over residues 1459–1470 (RPAKKLKHQPGH) the composition is skewed to basic residues. Residues 1480-1490 (LPPPPVPPPAI) are compositionally biased toward pro residues. Basic and acidic residues-rich tracts occupy residues 1516–1541 (ARTDRSSDRKGSSYKGREVLDGRQVV) and 1549–1573 (DPREAQEQQNDGKGRGNKAAKRDLP). Over residues 1592–1601 (FPTSNNPRDP) the composition is skewed to polar residues. Low complexity predominate over residues 1602 to 1614 (SSSSSMSSRGSGS). A compositionally biased stretch (acidic residues) spans 1642–1651 (NNEELEETES).

This sequence belongs to the immunoglobulin superfamily. ROBO family. Homodimer. Dimerization is mediated by the extracellular domain and is independent of SLIT liganding. Interacts with SLIT1. Interacts with SLIT2. Interacts with FLRT3. Interacts with MYO9B (via Rho-GAP domain). In terms of processing, ubiquitinated. May be deubiquitinated by USP33. As to expression, widely expressed, with exception of kidney.

It localises to the cell membrane. The protein resides in the cell projection. Its subcellular location is the axon. The protein localises to the endoplasmic reticulum-Golgi intermediate compartment membrane. Functionally, receptor for SLIT1 and SLIT2 that mediates cellular responses to molecular guidance cues in cellular migration, including axonal navigation at the ventral midline of the neural tube and projection of axons to different regions during neuronal development. Interaction with the intracellular domain of FLRT3 mediates axon attraction towards cells expressing NTN1. In axon growth cones, the silencing of the attractive effect of NTN1 by SLIT2 may require the formation of a ROBO1-DCC complex. Plays a role in the regulation of cell migration via its interaction with MYO9B; inhibits MYO9B-mediated stimulation of RHOA GTPase activity, and thereby leads to increased levels of active, GTP-bound RHOA. May be required for lung development. The polypeptide is Roundabout homolog 1 (ROBO1) (Homo sapiens (Human)).